The sequence spans 222 residues: Eukaryotic translation initiation factor 3 subunit K (222 aa).

Residues 46–208 form the PCI domain; that stretch reads YDLEANLAVL…KIKTKNITEK (163 aa).

The protein belongs to the eIF-3 subunit K family. In terms of assembly, component of the eukaryotic translation initiation factor 3 (eIF-3) complex. The eIF-3 complex interacts with pix.

The protein resides in the cytoplasm. Component of the eukaryotic translation initiation factor 3 (eIF-3) complex, which is involved in protein synthesis of a specialized repertoire of mRNAs and, together with other initiation factors, stimulates binding of mRNA and methionyl-tRNAi to the 40S ribosome. The eIF-3 complex specifically targets and initiates translation of a subset of mRNAs involved in cell proliferation. This chain is Eukaryotic translation initiation factor 3 subunit K, found in Drosophila willistoni (Fruit fly).